A 301-amino-acid polypeptide reads, in one-letter code: F-box protein At4g02733 (301 aa).

In terms of domain architecture, F-box spans 91–146 (NSISWFLPSELTVKVFSMVDTKSLMQASACCTMFNNCAMDPLCYFHIDLTKAFKHV).

The chain is F-box protein At4g02733 from Arabidopsis thaliana (Mouse-ear cress).